The primary structure comprises 199 residues: Chaperone protein TorD (199 aa).

Belongs to the TorD/DmsD family. TorD subfamily.

It localises to the cytoplasm. Its function is as follows. Involved in the biogenesis of TorA. Acts on TorA before the insertion of the molybdenum cofactor and, as a result, probably favors a conformation of the apoenzyme that is competent for acquiring the cofactor. This chain is Chaperone protein TorD, found in Escherichia coli O157:H7 (strain EC4115 / EHEC).